A 159-amino-acid chain; its full sequence is Protein Smg homolog (159 aa).

Belongs to the Smg family.

This chain is Protein Smg homolog, found in Vibrio parahaemolyticus serotype O3:K6 (strain RIMD 2210633).